Here is a 216-residue protein sequence, read N- to C-terminus: Large ribosomal subunit protein uL3 (216 aa).

Residues 135–156 (LGASHGTQRKHRSPGSIGGCAT) are disordered.

It belongs to the universal ribosomal protein uL3 family. As to quaternary structure, part of the 50S ribosomal subunit. Forms a cluster with proteins L14 and L19.

One of the primary rRNA binding proteins, it binds directly near the 3'-end of the 23S rRNA, where it nucleates assembly of the 50S subunit. The sequence is that of Large ribosomal subunit protein uL3 from Thermobifida fusca (strain YX).